The primary structure comprises 229 residues: Transmembrane 4 L6 family member 20 (229 aa).

The Lumenal portion of the chain corresponds to methionine 1–serine 14. Residues leucine 15 to valine 35 form a helical membrane-spanning segment. Topologically, residues glutamate 36–proline 44 are cytoplasmic. A helical transmembrane segment spans residues isoleucine 45–alanine 65. Residues threonine 66 to glycine 83 lie on the Lumenal side of the membrane. The chain crosses the membrane as a helical span at residues methionine 84–isoleucine 104. At serine 105 to arginine 185 the chain is on the cytoplasmic side. The helical transmembrane segment at leucine 186–glycine 206 threads the bilayer. Over leucine 207 to valine 229 the chain is Lumenal.

Belongs to the L6 tetraspanin family. Post-translationally, glycosylated at Asn-132, Asn-148 and Asn-163 in presence of ceramide which inverts the orientation of TM4SF20 in membranes exposing these residues to the endoplasmic reticulum lumen. Cleaved by signal peptidase at Ser-14 but the peptide does not act as a signal peptide. Cleavage is inhibited by ceramide which inverts the orientation of TM4SF20 in membranes exposing the N-terminus to the cytosol and not to the endoplasmic reticulum lumen. As to expression, expressed in the brain, with high levels in the parietal lobe, hippocampus, pons, white matter and cerebellum.

The protein localises to the membrane. Its subcellular location is the endoplasmic reticulum membrane. Functionally, polytopic transmembrane protein that inhibits regulated intramembrane proteolysis (RIP) of CREB3L1, inhibiting its activation and the induction of collagen synthesis. In response to ceramide, which alters TM4SF20 membrane topology, stimulates RIP activation of CREB3L1. Ceramide reverses the direction through which transmembrane helices are translocated into the endoplasmic reticulum membrane during translation of TM4SF20, this mechanism is called 'regulated alternative translocation' (RAT) and regulates the function of the transmembrane protein. The polypeptide is Transmembrane 4 L6 family member 20 (TM4SF20) (Homo sapiens (Human)).